Here is an 81-residue protein sequence, read N- to C-terminus: Putative membrane protein insertion efficiency factor (81 aa).

Residues 61–81 (NDGGFDPVPPAPSSRTSSIAE) form a disordered region.

This sequence belongs to the UPF0161 family.

The protein localises to the cell inner membrane. Its function is as follows. Could be involved in insertion of integral membrane proteins into the membrane. The protein is Putative membrane protein insertion efficiency factor of Pseudomonas putida (strain ATCC 700007 / DSM 6899 / JCM 31910 / BCRC 17059 / LMG 24140 / F1).